Consider the following 229-residue polypeptide: Biosynthetic peptidoglycan transglycosylase (229 aa).

The chain crosses the membrane as a helical span at residues 14–34; it reads FITWRFLLVVVLLLLVLLLVL.

Belongs to the glycosyltransferase 51 family.

The protein localises to the cell inner membrane. The catalysed reaction is [GlcNAc-(1-&gt;4)-Mur2Ac(oyl-L-Ala-gamma-D-Glu-L-Lys-D-Ala-D-Ala)](n)-di-trans,octa-cis-undecaprenyl diphosphate + beta-D-GlcNAc-(1-&gt;4)-Mur2Ac(oyl-L-Ala-gamma-D-Glu-L-Lys-D-Ala-D-Ala)-di-trans,octa-cis-undecaprenyl diphosphate = [GlcNAc-(1-&gt;4)-Mur2Ac(oyl-L-Ala-gamma-D-Glu-L-Lys-D-Ala-D-Ala)](n+1)-di-trans,octa-cis-undecaprenyl diphosphate + di-trans,octa-cis-undecaprenyl diphosphate + H(+). It participates in cell wall biogenesis; peptidoglycan biosynthesis. Functionally, peptidoglycan polymerase that catalyzes glycan chain elongation from lipid-linked precursors. This chain is Biosynthetic peptidoglycan transglycosylase, found in Shewanella denitrificans (strain OS217 / ATCC BAA-1090 / DSM 15013).